A 445-amino-acid chain; its full sequence is Tubulin beta-2A chain (445 aa).

Residues 1 to 4 carry the MREI motif motif; sequence MREI. Gln11 contributes to the GTP binding site. The residue at position 40 (Ser40) is a Phosphoserine. The residue at position 58 (Lys58) is an N6-acetyllysine; alternate. Lys58 bears the N6-succinyllysine; alternate mark. Lys58 is covalently cross-linked (Glycyl lysine isopeptide (Lys-Gly) (interchain with G-Cter in ubiquitin); alternate). The GTP site is built by Glu69, Ser138, Gly142, Thr143, and Gly144. Residue Glu69 coordinates Mg(2+). A Phosphoserine; by CDK1 modification is found at Ser172. GTP is bound by residues Asn204 and Asn226. Phosphothreonine is present on residues Thr285 and Thr290. Arg318 bears the Omega-N-methylarginine mark. Lys324 is covalently cross-linked (Glycyl lysine isopeptide (Lys-Gly) (interchain with G-Cter in ubiquitin)). The interval 422–445 is disordered; it reads YQQYQDATADEQGEFEEEEGEDEA. Residues 429 to 445 are compositionally biased toward acidic residues; that stretch reads TADEQGEFEEEEGEDEA. At Glu438 the chain carries 5-glutamyl polyglutamate.

It belongs to the tubulin family. Interacts with ZNRF1. Part of a complex composed at least of ASH2L, EMSY, HCFC1, HSPA8, CCAR2, MATR3, MKI67, RBBP5, TUBB2A, WDR5 and ZNF335; this complex may have a histone H3-specific methyltransferase activity. Dimer of alpha and beta chains. A typical microtubule is a hollow water-filled tube with an outer diameter of 25 nm and an inner diameter of 15 nM. Alpha-beta heterodimers associate head-to-tail to form protofilaments running lengthwise along the microtubule wall with the beta-tubulin subunit facing the microtubule plus end conferring a structural polarity. Microtubules usually have 13 protofilaments but different protofilament numbers can be found in some organisms and specialized cells. Requires Mg(2+) as cofactor. Some glutamate residues at the C-terminus are polyglutamylated, resulting in polyglutamate chains on the gamma-carboxyl group. Polyglutamylation plays a key role in microtubule severing by spastin (SPAST). SPAST preferentially recognizes and acts on microtubules decorated with short polyglutamate tails: severing activity by SPAST increases as the number of glutamates per tubulin rises from one to eight, but decreases beyond this glutamylation threshold. Glutamylation is also involved in cilia motility. Post-translationally, some glutamate residues at the C-terminus are monoglycylated but not polyglycylated due to the absence of functional TTLL10 in human. Monoglycylation is mainly limited to tubulin incorporated into cilia and flagella axonemes, which is required for their stability and maintenance. Flagella glycylation controls sperm motility. Both polyglutamylation and monoglycylation can coexist on the same protein on adjacent residues, and lowering glycylation levels increases polyglutamylation, and reciprocally. In terms of processing, phosphorylated on Ser-172 by CDK1 during the cell cycle, from metaphase to telophase, but not in interphase. This phosphorylation inhibits tubulin incorporation into microtubules. High expression in brain, where it represents 30% of all beta-tubulins.

The protein localises to the cytoplasm. The protein resides in the cytoskeleton. Its function is as follows. Tubulin is the major constituent of microtubules, a cylinder consisting of laterally associated linear protofilaments composed of alpha- and beta-tubulin heterodimers. Microtubules grow by the addition of GTP-tubulin dimers to the microtubule end, where a stabilizing cap forms. Below the cap, tubulin dimers are in GDP-bound state, owing to GTPase activity of alpha-tubulin. This is Tubulin beta-2A chain (TUBB2A) from Homo sapiens (Human).